The sequence spans 463 residues: Membrane-bound lytic murein transglycosylase F (463 aa).

The first 33 residues, 1–33 (MQSQDYKKRLKLQIIIILSIAVMSCGVPNVPTA), serve as a signal peptide directing secretion. Positions 34–272 (LSSLLERESI…VLEDKYFGHI (239 aa)) are non-LT domain. The LT domain stretch occupies residues 273–463 (RQFDYVDSRA…LVWLDEQGKI (191 aa)). Glu317 is a catalytic residue.

It in the N-terminal section; belongs to the bacterial solute-binding protein 3 family. The protein in the C-terminal section; belongs to the transglycosylase Slt family.

The protein resides in the cell outer membrane. The enzyme catalyses Exolytic cleavage of the (1-&gt;4)-beta-glycosidic linkage between N-acetylmuramic acid (MurNAc) and N-acetylglucosamine (GlcNAc) residues in peptidoglycan, from either the reducing or the non-reducing ends of the peptidoglycan chains, with concomitant formation of a 1,6-anhydrobond in the MurNAc residue.. Its function is as follows. Murein-degrading enzyme that degrades murein glycan strands and insoluble, high-molecular weight murein sacculi, with the concomitant formation of a 1,6-anhydromuramoyl product. Lytic transglycosylases (LTs) play an integral role in the metabolism of the peptidoglycan (PG) sacculus. Their lytic action creates space within the PG sacculus to allow for its expansion as well as for the insertion of various structures such as secretion systems and flagella. The chain is Membrane-bound lytic murein transglycosylase F from Alteromonas mediterranea (strain DSM 17117 / CIP 110805 / LMG 28347 / Deep ecotype).